The primary structure comprises 352 residues: N-acetyl-gamma-glutamyl-phosphate reductase (352 aa).

C155 is a catalytic residue.

This sequence belongs to the NAGSA dehydrogenase family. Type 1 subfamily.

It localises to the cytoplasm. The enzyme catalyses N-acetyl-L-glutamate 5-semialdehyde + phosphate + NADP(+) = N-acetyl-L-glutamyl 5-phosphate + NADPH + H(+). Its pathway is amino-acid biosynthesis; L-arginine biosynthesis; N(2)-acetyl-L-ornithine from L-glutamate: step 3/4. In terms of biological role, catalyzes the NADPH-dependent reduction of N-acetyl-5-glutamyl phosphate to yield N-acetyl-L-glutamate 5-semialdehyde. The chain is N-acetyl-gamma-glutamyl-phosphate reductase from Cyanothece sp. (strain PCC 7425 / ATCC 29141).